The sequence spans 166 residues: Regulator of ribonuclease activity A (166 aa).

This sequence belongs to the RraA family. Homotrimer. Binds to both RNA-binding sites in the C-terminal region of Rne and to RhlB.

Its subcellular location is the cytoplasm. Its function is as follows. Globally modulates RNA abundance by binding to RNase E (Rne) and regulating its endonucleolytic activity. Can modulate Rne action in a substrate-dependent manner by altering the composition of the degradosome. Modulates RNA-binding and helicase activities of the degradosome. The protein is Regulator of ribonuclease activity A of Mannheimia succiniciproducens (strain KCTC 0769BP / MBEL55E).